The primary structure comprises 283 residues: Beta-glucoside operon antiterminator (283 aa).

PRD domains lie at 65–170 (RIPL…SHMP) and 171–280 (EVMR…LQEQ).

This sequence belongs to the transcriptional antiterminator BglG family. Post-translationally, phosphorylated and inactivated by ArbF (EII-Bgl). The degree of phosphorylation is dependent on the presence or absence of beta-glucosides which act as inducers of the operon expression. Addition of inducer result in the rapid dephosphorylation of ArbG.

In terms of biological role, mediates the positive regulation of the beta-glucoside (arb) operon by functioning as a transcriptional antiterminator. This is an RNA-binding protein that recognizes a specific sequence located just upstream of two termination sites within the operon. The polypeptide is Beta-glucoside operon antiterminator (arbG) (Dickeya chrysanthemi (Pectobacterium chrysanthemi)).